Here is a 671-residue protein sequence, read N- to C-terminus: DNA ligase (671 aa).

NAD(+) contacts are provided by residues 32-36 (DAEYD), 81-82 (SL), and Glu113. The active-site N6-AMP-lysine intermediate is Lys115. Positions 136, 173, 290, and 314 each coordinate NAD(+). Zn(2+) is bound by residues Cys408, Cys411, Cys426, and Cys432. The BRCT domain maps to 593–671 (EIDSPFAGKT…EAEMLRLLGS (79 aa)).

This sequence belongs to the NAD-dependent DNA ligase family. LigA subfamily. Requires Mg(2+) as cofactor. Mn(2+) is required as a cofactor.

It carries out the reaction NAD(+) + (deoxyribonucleotide)n-3'-hydroxyl + 5'-phospho-(deoxyribonucleotide)m = (deoxyribonucleotide)n+m + AMP + beta-nicotinamide D-nucleotide.. In terms of biological role, DNA ligase that catalyzes the formation of phosphodiester linkages between 5'-phosphoryl and 3'-hydroxyl groups in double-stranded DNA using NAD as a coenzyme and as the energy source for the reaction. It is essential for DNA replication and repair of damaged DNA. The sequence is that of DNA ligase from Shigella dysenteriae serotype 1 (strain Sd197).